Reading from the N-terminus, the 28-residue chain is Dermaseptin-2.2TR (28 aa).

Expressed by the skin glands.

It localises to the secreted. In terms of biological role, has antimicrobial activity. In Phyllomedusa trinitatis (Trinidad leaf frog), this protein is Dermaseptin-2.2TR.